The primary structure comprises 178 residues: Probable host range protein 2 (178 aa).

Belongs to the poxviridae C7 protein family.

Plays a role for multiplication of the virus in different cell types. The sequence is that of Probable host range protein 2 from Yaba-like disease virus (YLDV).